Here is a 388-residue protein sequence, read N- to C-terminus: Beta-1,4-galactosyltransferase 5 (388 aa).

Over 1 to 14 the chain is Cytoplasmic; that stretch reads MRARRGLLRLPRRS. The helical; Signal-anchor for type II membrane protein transmembrane segment at 15 to 35 threads the bilayer; the sequence is LLAALFFFSLSSSLLYFVYVA. Topologically, residues 36 to 388 are lumenal; it reads PGIVNTYLFM…TPELAQVNEY (353 aa). N-linked (GlcNAc...) asparagine glycans are attached at residues Asn77, Asn81, Asn90, Asn111, and Asn128. Cys114 and Cys158 are disulfide-bonded. Residues 169–173, 208–210, 235–236, Tyr264, and Trp296 contribute to the UDP-alpha-D-galactose site; these read PFRNR, FNR, and VD. An intrachain disulfide couples Cys229 to Cys248. Asp236 provides a ligand contact to Mn(2+). 298–301 is an N-acetyl-D-glucosamine binding site; it reads GEDD. Residue His329 coordinates Mn(2+). 329 to 330 lines the UDP-alpha-D-galactose pocket; that stretch reads HH. N-acetyl-D-glucosamine is bound at residue Arg340. Asn364 and Asn373 each carry an N-linked (GlcNAc...) asparagine glycan.

This sequence belongs to the glycosyltransferase 7 family. Mn(2+) is required as a cofactor. As to expression, ubiquitously expressed.

It is found in the golgi apparatus. The protein localises to the golgi stack membrane. The enzyme catalyses a beta-D-glucosyl-(1&lt;-&gt;1')-N-acylsphing-4-enine + UDP-alpha-D-galactose = a beta-D-Gal-(1-&gt;4)-beta-D-Glc-(1&lt;-&gt;1)-Cer(d18:1(4E)) + UDP + H(+). It participates in protein modification; protein glycosylation. It functions in the pathway sphingolipid metabolism. Functionally, catalyzes the synthesis of lactosylceramide (LacCer) via the transfer of galactose from UDP-galactose to glucosylceramide (GlcCer). LacCer is the starting point in the biosynthesis of all gangliosides (membrane-bound glycosphingolipids) which play pivotal roles in the CNS including neuronal maturation and axonal and myelin formation. Plays a role in the glycosylation of BMPR1A and regulation of its protein stability. Essential for extraembryonic development during early embryogenesis. The polypeptide is Beta-1,4-galactosyltransferase 5 (Homo sapiens (Human)).